Consider the following 361-residue polypeptide: Chorismate synthase (361 aa).

Arg47 is a binding site for NADP(+). FMN contacts are provided by residues 124 to 126 (RAS), Gly286, 301 to 305 (KPTAT), and Arg327.

Belongs to the chorismate synthase family. In terms of assembly, homotetramer. FMNH2 serves as cofactor.

It carries out the reaction 5-O-(1-carboxyvinyl)-3-phosphoshikimate = chorismate + phosphate. It participates in metabolic intermediate biosynthesis; chorismate biosynthesis; chorismate from D-erythrose 4-phosphate and phosphoenolpyruvate: step 7/7. Its function is as follows. Catalyzes the anti-1,4-elimination of the C-3 phosphate and the C-6 proR hydrogen from 5-enolpyruvylshikimate-3-phosphate (EPSP) to yield chorismate, which is the branch point compound that serves as the starting substrate for the three terminal pathways of aromatic amino acid biosynthesis. This reaction introduces a second double bond into the aromatic ring system. The chain is Chorismate synthase from Prochlorococcus marinus (strain NATL1A).